The primary structure comprises 453 residues: Na(+)/H(+) antiporter NhaA (453 aa).

A run of 12 helical transmembrane segments spans residues 27 to 47, 78 to 98, 114 to 134, 143 to 163, 172 to 192, 201 to 221, 222 to 242, 249 to 269, 316 to 336, 346 to 366, 385 to 405, and 421 to 441; these read FLHI…AALM, LHFW…GMEI, ILPI…YFSF, GWAV…ALLG, IILL…IAFF, GLVI…IGFA, SAWL…VTGI, VILG…PLTI, PWVA…VSFA, FLIV…GIIT, WAGI…SIFV, and IGVL…GLIY.

The protein belongs to the NhaA Na(+)/H(+) (TC 2.A.33) antiporter family.

The protein localises to the cell inner membrane. It catalyses the reaction Na(+)(in) + 2 H(+)(out) = Na(+)(out) + 2 H(+)(in). Functionally, na(+)/H(+) antiporter that extrudes sodium in exchange for external protons. This is Na(+)/H(+) antiporter NhaA from Bartonella henselae (strain ATCC 49882 / DSM 28221 / CCUG 30454 / Houston 1) (Rochalimaea henselae).